The following is a 162-amino-acid chain: Cytochrome c-type biogenesis protein CcmE (162 aa).

Topologically, residues 1-8 (MNPRRKKR) are cytoplasmic. A helical; Signal-anchor for type II membrane protein membrane pass occupies residues 9–29 (LALVVGLIGGVAAVASLLLYA). The Periplasmic segment spans residues 30–162 (LNTNLNLFYT…YTETQKGGSR (133 aa)). Residues His-131 and Tyr-135 each contribute to the heme site.

It belongs to the CcmE/CycJ family.

The protein resides in the cell inner membrane. Heme chaperone required for the biogenesis of c-type cytochromes. Transiently binds heme delivered by CcmC and transfers the heme to apo-cytochromes in a process facilitated by CcmF and CcmH. In Shewanella amazonensis (strain ATCC BAA-1098 / SB2B), this protein is Cytochrome c-type biogenesis protein CcmE.